Reading from the N-terminus, the 55-residue chain is ATP synthase protein 8 (55 aa).

The chain crosses the membrane as a helical span at residues Asn7–Ile24. The segment at Thr34–Thr55 is disordered. Positions Thr43–Thr55 are enriched in low complexity.

It belongs to the ATPase protein 8 family. As to quaternary structure, F-type ATPases have 2 components, CF(1) - the catalytic core - and CF(0) - the membrane proton channel.

Its subcellular location is the mitochondrion membrane. In terms of biological role, mitochondrial membrane ATP synthase (F(1)F(0) ATP synthase or Complex V) produces ATP from ADP in the presence of a proton gradient across the membrane which is generated by electron transport complexes of the respiratory chain. F-type ATPases consist of two structural domains, F(1) - containing the extramembraneous catalytic core and F(0) - containing the membrane proton channel, linked together by a central stalk and a peripheral stalk. During catalysis, ATP synthesis in the catalytic domain of F(1) is coupled via a rotary mechanism of the central stalk subunits to proton translocation. Part of the complex F(0) domain. Minor subunit located with subunit a in the membrane. This chain is ATP synthase protein 8 (MT-ATP8), found in Vireo altiloquus (Black-whiskered vireo).